The following is a 387-amino-acid chain: Cytochrome b (387 aa).

The next 4 helical transmembrane spans lie at F32 to M52, W76 to G98, V113 to V133, and F179 to I199. Heme b-binding residues include H82 and H96. Heme b-binding residues include H183 and H197. Position 202 (H202) interacts with a ubiquinone. 4 consecutive transmembrane segments (helical) span residues Y226–F246, L290–D310, L322–A342, and F349–P369.

Belongs to the cytochrome b family. Fungal cytochrome b-c1 complex contains 10 subunits; 3 respiratory subunits, 2 core proteins and 5 low-molecular weight proteins. Cytochrome b-c1 complex is a homodimer. It depends on heme b as a cofactor.

Its subcellular location is the mitochondrion inner membrane. Component of the ubiquinol-cytochrome c reductase complex (complex III or cytochrome b-c1 complex) that is part of the mitochondrial respiratory chain. The b-c1 complex mediates electron transfer from ubiquinol to cytochrome c. Contributes to the generation of a proton gradient across the mitochondrial membrane that is then used for ATP synthesis. This chain is Cytochrome b (COB), found in Podospora anserina (strain S / ATCC MYA-4624 / DSM 980 / FGSC 10383) (Pleurage anserina).